We begin with the raw amino-acid sequence, 213 residues long: Protein-L-isoaspartate O-methyltransferase (213 aa).

Residue Ser-58 is part of the active site.

Belongs to the methyltransferase superfamily. L-isoaspartyl/D-aspartyl protein methyltransferase family.

The protein localises to the cytoplasm. It carries out the reaction [protein]-L-isoaspartate + S-adenosyl-L-methionine = [protein]-L-isoaspartate alpha-methyl ester + S-adenosyl-L-homocysteine. In terms of biological role, catalyzes the methyl esterification of L-isoaspartyl residues in peptides and proteins that result from spontaneous decomposition of normal L-aspartyl and L-asparaginyl residues. It plays a role in the repair and/or degradation of damaged proteins. This is Protein-L-isoaspartate O-methyltransferase from Chlorobaculum tepidum (strain ATCC 49652 / DSM 12025 / NBRC 103806 / TLS) (Chlorobium tepidum).